Consider the following 1451-residue polypeptide: ARF guanine-nucleotide exchange factor GNOM (1451 aa).

The segment at 1-246 is DCB domain; that stretch reads MGRLKLHSGI…VNRAGSIKQE (246 aa). The SEC7 domain occupies 557–752; sequence RRKYIKRRLM…NEIRTTPEQG (196 aa). Residue E658 is part of the active site. Positions 1430–1451 are disordered; the sequence is SQLGDDETVSNGLSSPENTTGS.

In terms of assembly, homodimer. Interacts with CYP19-4/CYP5 in vitro. In terms of tissue distribution, stems, leaves, flowers, siliques, floral inflorescence and roots. Expressed in the whole plant (at the protein level).

It localises to the cytoplasm. It is found in the cytosol. The protein resides in the endosome membrane. Its subcellular location is the cell membrane. With respect to regulation, inhibited by brefeldin A (BFA). Activates the ARF proteins by exchanging bound GDP for free GTP. Plays a role in vesicular protein sorting. Acts as the major regulator of endosomal vesicle trafficking but is also involved in the endocytosis process. Could function redundantly with GNL1 in the retrograde Golgi to endoplasmic reticulum trafficking. Regulates vesicle trafficking required for the coordinated polar localization of auxin efflux carriers which in turn determines the direction of auxin flow. Mediates the sorting of PIN1 from endosomal compartments to the basal plasma membrane and the polarization of PIN3 to the bottom side of hypocotyl endodermal cells. Involved in the specification of apical-basal pattern formation in the early embryo and during root formation. Required for correct cell wall organization leading to normal cell adhesion during seedling development. Also plays an essential role in hydrotropism of seedling roots. This is ARF guanine-nucleotide exchange factor GNOM (GN) from Arabidopsis thaliana (Mouse-ear cress).